Reading from the N-terminus, the 80-residue chain is DNA-binding protein HU-like (80 aa).

Belongs to the bacterial histone-like protein family.

In terms of biological role, histone-like DNA-binding protein which is capable of wrapping DNA to stabilize it, and thus to prevent its denaturation under extreme environmental conditions. The chain is DNA-binding protein HU-like from Rickettsia prowazekii (strain Madrid E).